We begin with the raw amino-acid sequence, 81 residues long: Sulfur carrier protein TusA (81 aa).

Cysteine 19 serves as the catalytic Cysteine persulfide intermediate.

It belongs to the sulfur carrier protein TusA family.

The protein localises to the cytoplasm. Sulfur carrier protein which probably makes part of a sulfur-relay system. The chain is Sulfur carrier protein TusA from Shewanella oneidensis (strain ATCC 700550 / JCM 31522 / CIP 106686 / LMG 19005 / NCIMB 14063 / MR-1).